The chain runs to 96 residues: Co-chaperonin GroES (96 aa).

The protein belongs to the GroES chaperonin family. Heptamer of 7 subunits arranged in a ring. Interacts with the chaperonin GroEL.

It localises to the cytoplasm. In terms of biological role, together with the chaperonin GroEL, plays an essential role in assisting protein folding. The GroEL-GroES system forms a nano-cage that allows encapsulation of the non-native substrate proteins and provides a physical environment optimized to promote and accelerate protein folding. GroES binds to the apical surface of the GroEL ring, thereby capping the opening of the GroEL channel. The chain is Co-chaperonin GroES from Citrifermentans bemidjiense (strain ATCC BAA-1014 / DSM 16622 / JCM 12645 / Bem) (Geobacter bemidjiensis).